A 341-amino-acid chain; its full sequence is D-aspartate oxidase (341 aa).

Met-1 carries the blocked amino end (Met) modification. 7 residues coordinate FAD: Asp-36, Lys-37, Thr-43, Ser-44, Met-50, Gly-307, and Ile-311. The short motif at 339-341 (SKL) is the Microbody targeting signal element.

Belongs to the DAMOX/DASOX family. In terms of assembly, monomer. Interacts with PEX5; the interaction is direct and required for localization of DDO to the peroxisome. FAD serves as cofactor. In the kidney, expressed in epithelial cells of the proximal tubules and in the liver (at protein level).

The protein localises to the peroxisome matrix. Its subcellular location is the cytoplasm. It localises to the cytosol. The enzyme catalyses D-aspartate + O2 + H2O = oxaloacetate + H2O2 + NH4(+). It catalyses the reaction D-glutamate + O2 + H2O = H2O2 + 2-oxoglutarate + NH4(+). With respect to regulation, inhibited by phenylglyoxal; chemical modification of arginine residues in the enzyme with phenylglyoxal leads to the irreversible loss of activity towards dicarboxylic D-amino acids, paralleled by a transient appearance of activity versus monocarboxylic ones. Functionally, selectively catalyzes the oxidative deamination of acidic amino acids. Suppresses the level of D-aspartate in the brain, an amino acid that can act as an agonist for glutamate receptors. Protects the organism from the toxicity of D-amino acids. May also function in the intestine. This chain is D-aspartate oxidase (DDO), found in Bos taurus (Bovine).